The chain runs to 79 residues: Small ribosomal subunit protein bS18 (79 aa).

It belongs to the bacterial ribosomal protein bS18 family. As to quaternary structure, part of the 30S ribosomal subunit. Forms a tight heterodimer with protein bS6.

Binds as a heterodimer with protein bS6 to the central domain of the 16S rRNA, where it helps stabilize the platform of the 30S subunit. This Bacillus subtilis (strain 168) protein is Small ribosomal subunit protein bS18 (rpsR).